The primary structure comprises 177 residues: Large ribosomal subunit protein uL6 (177 aa).

The protein belongs to the universal ribosomal protein uL6 family. As to quaternary structure, part of the 50S ribosomal subunit.

Functionally, this protein binds to the 23S rRNA, and is important in its secondary structure. It is located near the subunit interface in the base of the L7/L12 stalk, and near the tRNA binding site of the peptidyltransferase center. The protein is Large ribosomal subunit protein uL6 of Serratia proteamaculans (strain 568).